The primary structure comprises 594 residues: Zinc finger protein 467 (594 aa).

Residues 1-86 (MRETLEALNS…PQKAEPAGSV (86 aa)) are disordered. The segment at 1–183 (MRETLEALNS…TLRLHQRLHR (183 aa)) is interaction with STAT3. Polar residues predominate over residues 31–47 (SNAQEKMSSRGESTLHS). Over residues 54-64 (PGQKEGIHTEQ) the composition is skewed to basic and acidic residues. Lys97 participates in a covalent cross-link: Glycyl lysine isopeptide (Lys-Gly) (interchain with G-Cter in SUMO2). 12 consecutive C2H2-type zinc fingers follow at residues 160–182 (YGCEECERRFRDQLTLRLHQRLH), 188–210 (CACPDCGRSFTQRAHMLLHQRSH), 216–238 (FPCSECDKRFSKKAHLTRHLRTH), 244–266 (YPCAECGKRFSQKIHLGSHQKTH), 272–294 (FPCTECEKRFRKKTHLIRHQRIH), 300–322 (YQCTQCTRSFTHKQHLVRHQRVH), 355–377 (FACSHCGQSFGWKKNLATHQSLH), 430–452 (FFCPDCGRGFAHGQHLARHRRVH), 458–480 (FACAQCGRRFGSRPNLVAHSRAH), 486–508 (FACAQCGRRFSRKSHLGRHQAVH), 514–536 (HACAVCARCFSSKTNLVRHQAIH), and 542–564 (FSCPQCAKSFSRKTHLVRHQRIH). The interval 313–351 (QHLVRHQRVHDAASRTRSSPDIPVAPHSPTASLTPSPPG) is disordered. Residue Lys368 forms a Glycyl lysine isopeptide (Lys-Gly) (interchain with G-Cter in SUMO2) linkage.

It belongs to the krueppel C2H2-type zinc-finger protein family. Interacts with STAT3. Enhances STAT3 activity by keeping it in the nucleus.

The protein localises to the nucleus. Functionally, transcription factor that promotes adipocyte differentiation and suppresses osteoblast differentiation in the bone marrow. Enhances the osteoclast-supporting ability of stromal cells. Binds with STAT3 the consensus sequence 5'-CTTCTGGGAAGA-3' of the acute phase response element (APRE). Transactivates several promoters including FOS, OSM and PPARG. Recruits a histone deacetylase complex. The protein is Zinc finger protein 467 (Znf467) of Mus musculus (Mouse).